The primary structure comprises 233 residues: DNA repair protein RecO (233 aa).

This sequence belongs to the RecO family.

Its function is as follows. Involved in DNA repair and RecF pathway recombination. This chain is DNA repair protein RecO, found in Pseudomonas paraeruginosa (strain DSM 24068 / PA7) (Pseudomonas aeruginosa (strain PA7)).